A 150-amino-acid chain; its full sequence is 3-dehydroquinate dehydratase (150 aa).

Tyr22 serves as the catalytic Proton acceptor. 3 residues coordinate substrate: Asn73, His79, and Asp86. Residue His99 is the Proton donor of the active site. Substrate-binding positions include Leu100–Thr101 and Arg110.

This sequence belongs to the type-II 3-dehydroquinase family. In terms of assembly, homododecamer.

The catalysed reaction is 3-dehydroquinate = 3-dehydroshikimate + H2O. Its pathway is metabolic intermediate biosynthesis; chorismate biosynthesis; chorismate from D-erythrose 4-phosphate and phosphoenolpyruvate: step 3/7. Functionally, catalyzes a trans-dehydration via an enolate intermediate. In Desulforudis audaxviator (strain MP104C), this protein is 3-dehydroquinate dehydratase.